The chain runs to 328 residues: L-lactate dehydrogenase (328 aa).

NAD(+)-binding positions include Val18, Glu39, Lys46, Tyr71, and 85-86 (GA). Gln88 and Arg94 together coordinate substrate. NAD(+)-binding positions include Ser107, 124–126 (AAN), and Ser149. 126-129 (NPVD) contacts substrate. 154–157 (DSAR) provides a ligand contact to substrate. Beta-D-fructose 1,6-bisphosphate is bound by residues Arg159 and His174. The Proton acceptor role is filled by His181. The residue at position 226 (Tyr226) is a Phosphotyrosine. Thr235 is a binding site for substrate.

It belongs to the LDH/MDH superfamily. LDH family. As to quaternary structure, homotetramer.

It is found in the cytoplasm. It catalyses the reaction (S)-lactate + NAD(+) = pyruvate + NADH + H(+). Its pathway is fermentation; pyruvate fermentation to lactate; (S)-lactate from pyruvate: step 1/1. Allosterically activated by fructose 1,6-bisphosphate (FBP). Its function is as follows. Catalyzes the conversion of lactate to pyruvate. The sequence is that of L-lactate dehydrogenase from Streptococcus sanguinis (strain SK36).